Here is an 852-residue protein sequence, read N- to C-terminus: DNA mismatch repair protein MutS (852 aa).

Gly615–Ser622 is an ATP binding site.

Belongs to the DNA mismatch repair MutS family.

Its function is as follows. This protein is involved in the repair of mismatches in DNA. It is possible that it carries out the mismatch recognition step. This protein has a weak ATPase activity. The protein is DNA mismatch repair protein MutS of Thermodesulfovibrio yellowstonii (strain ATCC 51303 / DSM 11347 / YP87).